The following is an 842-amino-acid chain: Putative G-type lectin S-receptor-like serine/threonine-protein kinase At1g61610 (842 aa).

An N-terminal signal peptide occupies residues methionine 1 to serine 22. Asparagine 7, asparagine 23, asparagine 35, asparagine 60, asparagine 110, asparagine 123, asparagine 304, asparagine 351, and asparagine 380 each carry an N-linked (GlcNAc...) asparagine glycan. Residues asparagine 23–threonine 443 lie on the Extracellular side of the membrane. Residues serine 29 to serine 150 enclose the Bulb-type lectin domain. The 40-residue stretch at proline 292 to aspartate 331 folds into the EGF-like domain. 2 disulfide bridges follow: cysteine 296–cysteine 308 and cysteine 302–cysteine 319. A PAN domain is found at cysteine 350–alanine 431. Disulfide bonds link cysteine 385–cysteine 406 and cysteine 389–cysteine 395. Asparagine 441 is a glycosylation site (N-linked (GlcNAc...) asparagine). A helical transmembrane segment spans residues leucine 444–leucine 464. Over tryptophan 465 to arginine 842 the chain is Cytoplasmic. Residues phenylalanine 525 to leucine 814 enclose the Protein kinase domain. ATP contacts are provided by residues leucine 531–valine 539 and lysine 553. Phosphoserine is present on serine 559. The segment at serine 614 to isoleucine 631 is caM-binding. Aspartate 650 (proton acceptor) is an active-site residue. Phosphoserine occurs at positions 654 and 667. A Phosphothreonine modification is found at threonine 684. Serine 728 and serine 830 each carry phosphoserine. Position 837 is a phosphothreonine (threonine 837).

It belongs to the protein kinase superfamily. Ser/Thr protein kinase family.

It localises to the cell membrane. It catalyses the reaction L-seryl-[protein] + ATP = O-phospho-L-seryl-[protein] + ADP + H(+). It carries out the reaction L-threonyl-[protein] + ATP = O-phospho-L-threonyl-[protein] + ADP + H(+). The chain is Putative G-type lectin S-receptor-like serine/threonine-protein kinase At1g61610 from Arabidopsis thaliana (Mouse-ear cress).